Here is a 289-residue protein sequence, read N- to C-terminus: ATP synthase subunit a (289 aa).

7 consecutive transmembrane segments (helical) span residues 41 to 61, 101 to 121, 129 to 149, 166 to 186, 189 to 209, 222 to 242, and 244 to 264; these read KATALTIFAALFVGVIFWLGF, YLLVLFSFVLVSNVLAIIPAA, IAVPMVLAVVTWVMFIYAGIK, TAPLAIRLLLGPIEILSTLIV, FTLAIRLFANMFAGHLLLLVF, FVFGVASLLVAIVLTAFELVI, and ALQAYIITILTAAYIGGAMAH.

Belongs to the ATPase A chain family. In terms of assembly, F-type ATPases have 2 components, CF(1) - the catalytic core - and CF(0) - the membrane proton channel. CF(1) has five subunits: alpha(3), beta(3), gamma(1), delta(1), epsilon(1). CF(0) has three main subunits: a(1), b(2) and c(9-12). The alpha and beta chains form an alternating ring which encloses part of the gamma chain. CF(1) is attached to CF(0) by a central stalk formed by the gamma and epsilon chains, while a peripheral stalk is formed by the delta and b chains.

The protein resides in the cell membrane. Functionally, key component of the proton channel; it plays a direct role in the translocation of protons across the membrane. This Frankia alni (strain DSM 45986 / CECT 9034 / ACN14a) protein is ATP synthase subunit a.